Consider the following 176-residue polypeptide: Interleukin-1 receptor antagonist protein (176 aa).

The first 25 residues, 1–25 (METCRCPLSYLISFLLFLSHSETAC), serve as a signal peptide directing secretion. A disulfide bridge links Cys91 with Cys141. The N-linked (GlcNAc...) asparagine glycan is linked to Asn109.

This sequence belongs to the IL-1 family.

It localises to the secreted. Anti-inflammatory antagonist of interleukin-1 family of proinflammatory cytokines such as interleukin-1beta/IL1B and interleukin-1alpha/IL1A. Protects from immune dysregulation and uncontrolled systemic inflammation triggered by IL1 for a range of innate stimulatory agents such as pathogens. The sequence is that of Interleukin-1 receptor antagonist protein (IL1RN) from Canis lupus familiaris (Dog).